The primary structure comprises 77 residues: Putative defensin-like protein 30 (77 aa).

The N-terminal stretch at 1-26 (MASSSKCAFLVFLCMIVLLAPSEVHA) is a signal peptide. 3 disulfide bridges follow: cysteine 43–cysteine 63, cysteine 49–cysteine 72, and cysteine 53–cysteine 74.

It belongs to the DEFL family.

The protein resides in the secreted. The protein is Putative defensin-like protein 30 of Arabidopsis thaliana (Mouse-ear cress).